Consider the following 329-residue polypeptide: Protein Brevis radix-like 4 (329 aa).

The segment at 12 to 37 (SGTSRHHGQQRRGGSPPPRGRTTSVY) is disordered. One can recognise a BRX 1 domain in the interval 86–142 (REWVAQVEPGVQITFVSLAGGGGNDLKRIRFSREMYDKWQAQKWWGENNERIMELYN). The segment at 151–263 (LPTPPRSDDG…TTSCSSRDEV (113 aa)) is disordered. Low complexity-rich tracts occupy residues 222-236 (SNPS…QQPQ) and 243-252 (AAASDAMDAA). The span at 253–263 (RTTSCSSRDEV) shows a compositional bias: polar residues. In terms of domain architecture, BRX 2 spans 274–329 (TEWVIQDEPGVYITVRELADGTRELRRVRFSRERFAELNAKLWWEENKERIQAQYL).

The protein belongs to the BRX family.

Its subcellular location is the nucleus. This chain is Protein Brevis radix-like 4 (BRXL4), found in Oryza sativa subsp. japonica (Rice).